Consider the following 414-residue polypeptide: MEQLQSLRGMVDLLPAATSRWQWLEQTAREHFRRSCIREIRTPLLEATELFARGIGEATDVVGKEMYSFNDRGDRSCTLRPEGTASVVRAAIQHGLLSQGAQRLWYGGPMFRYERPQGGRQRQFHQIGIEFLGFADPRSDVEAIAIAWDLLEALGITGLQLELNSLGSRVDRQTYRDALVGWLSERQNQLDADSQQRLATNPLRILDSKNPQTQQLLQDAPNLEQSLSDPSRERYEQVKAGLSALKIPYLCNPRLVRGLDYYGHTAFEITSDALGAQATVCGGGRYDGLVEQLGGPAAACVGWAMGLERLMLLLGDESQQSQPPDVVVISQGNAAEALAVPVARQLRQIGQAVDVDLSGAGFGKQLKRAGKSGARWAVLIGDEEASSGQLQRKDLHSGDSSTIALQSLAENWIS.

The protein belongs to the class-II aminoacyl-tRNA synthetase family. As to quaternary structure, homodimer.

It is found in the cytoplasm. It catalyses the reaction tRNA(His) + L-histidine + ATP = L-histidyl-tRNA(His) + AMP + diphosphate + H(+). In Synechococcus sp. (strain RCC307), this protein is Histidine--tRNA ligase.